We begin with the raw amino-acid sequence, 130 residues long: Spore coat protein M (130 aa).

In terms of biological role, involved in spore outer coat assembly. May be part of a cross-linked insoluble skeleton that surrounds the spore, serves as a matrix for the assembly of additional outer coat material, and confers structural stability to the final structure. The polypeptide is Spore coat protein M (cotM) (Bacillus subtilis (strain 168)).